A 679-amino-acid polypeptide reads, in one-letter code: Methionine--tRNA ligase (679 aa).

Positions 14-24 match the 'HIGH' region motif; sequence PYANGSIHLGH. Zn(2+) is bound by residues Cys145, Cys148, Cys158, and Cys161. The 'KMSKS' region motif lies at 331–335; sequence KMSKS. Lys334 is an ATP binding site. The tRNA-binding domain occupies 577 to 679; that stretch reads TFAAVDLRVA…SGAKPGQRIK (103 aa).

It belongs to the class-I aminoacyl-tRNA synthetase family. MetG type 1 subfamily. Homodimer. Zn(2+) is required as a cofactor.

The protein localises to the cytoplasm. It catalyses the reaction tRNA(Met) + L-methionine + ATP = L-methionyl-tRNA(Met) + AMP + diphosphate. Functionally, is required not only for elongation of protein synthesis but also for the initiation of all mRNA translation through initiator tRNA(fMet) aminoacylation. In Pseudomonas entomophila (strain L48), this protein is Methionine--tRNA ligase.